Consider the following 407-residue polypeptide: Large ribosomal subunit protein uL3-like (407 aa).

The span at 1 to 31 shows a compositional bias: basic residues; the sequence is MSHRKFSAPRHGHLGFLPHKRSRRHRGKVKS. A disordered region spans residues 1 to 37; sequence MSHRKFSAPRHGHLGFLPHKRSRRHRGKVKSWPRDDP.

It belongs to the universal ribosomal protein uL3 family. Component of the large ribosomal subunit (LSU). Part of a LSU subcomplex, the 5S RNP which is composed of the 5S RNA, RPL5 and RPL11. Interacts with NVL in an ATP-dependent manner. Interacts with RRP1B. Interacts with IPO5, IPO7 and KPNB1; these interactions may be involved in RPL5 nuclear import for the assembly of ribosomal subunits. Interacts with RRP1B. Expression is restricted to striated muscles.

Heart- and skeletal muscle-specific component of the ribosome, which regulates muscle function. Component of the large ribosomal subunit in striated muscle cells: replaces the RPL3 paralog in the ribosome in these cells. The ribosome is a large ribonucleoprotein complex responsible for the synthesis of proteins in the cell. Inhibits myotube growth and muscle function. The polypeptide is Large ribosomal subunit protein uL3-like (Mus musculus (Mouse)).